The primary structure comprises 636 residues: MDGFYPTNLKNAVIYAALILILLFVYGIFGSIYIMHLGVIDAIYYTITTVTTTGFGDIRPITPSQKLFTASLELIGAGFLLYIFTLMLSVMFMSFSEYVTGAKLKRKIASMKNHFILCGFGRVGSTAFKELKKRKQKVVIIEKNKDLVETELWSDPNIIAIPGDATKENVLRYAGIERAKCIIIATGSDVDNLFITIEAKELNPKIWIVARASERENISRLKKAGANRIISPEFSGGKDIYFAAMEPLMMKITVKHGMESIKREAEIIFKHNCTLENIMYHLPEFREPLKRKIEVSDLDHIEKFLFQVKKNPRLRESLNKMYESTSGVHSHWISGPSKENLEKVVEDLKKEGILLGVNLDDEKIKEITRKYGMLAEVMVKPEITVVNKHGIDEIRDEAEIILKHGCTIEDIEYYIPGFREPLKRHVGADSIEDIDKFLNTLKKDPKKYDAIDRLYMLSGGGIHSHVISARSLESLNKVEKELKEKGFLIGVNMSLGEIKEMIQKSGTVVDILVQHDVKNLEDKKTVVKYGGRILTSKHYLPGIRYVLTRKLNLKTMEDVKKCEKELEKPRARRTLTALYELSANIHSHTIVTPSAEITKKIEEELKEKGILLGVNFPEEKIWEMVEKEAVEPFCVD.

The next 3 membrane-spanning stretches (helical) occupy residues 12-32 (AVIY…FGSI), 34-54 (IMHL…TTTG), and 75-95 (IGAG…FMSF). Residues 112-231 (KNHFILCGFG…KKAGANRIIS (120 aa)) enclose the RCK N-terminal domain.

It localises to the cell membrane. This is an uncharacterized protein from Methanothermus fervidus (strain ATCC 43054 / DSM 2088 / JCM 10308 / V24 S).